Consider the following 420-residue polypeptide: MVDRWYNIAADLPGVLAPPKDPDEGESRIALLTRILPSALIDQEFTAERWVPIPEEVREVYRRVGRPTPLLRAEGFERALGTKVHIYYKYEGVLPVGSHKLNTAVAQAYYAKADGAVEVATETGAGQWGMAVSLAAALFGLKATVFMTRSSYNSKRQRLVFMRAYGATVYPSPSEVTETGRRHFRPDHPGSLGIAISEAVEYVLSGERRKYLPGSVMEFVLLHQTVIGLEAMRQLPEEPDYAVACVGGGSNFGGFTYPMLGAKLRGEGFGKTKFLAVESAAAPKLTRGEYRYDFPDATGILPLIKMYTLGHDYVPPPVHAAGLRYHGAAPSLSLLKRLGHVEAVAYGQEEVMEAALLFARSEGVLPAPESAHAVRAVIYLAKKLPPGSVVVFNMSGHGLLDVDAYEKALEWEKIYKHPED.

Lys100 bears the N6-(pyridoxal phosphate)lysine mark.

Belongs to the TrpB family. In terms of assembly, tetramer of two alpha and two beta chains. Pyridoxal 5'-phosphate is required as a cofactor.

It carries out the reaction (1S,2R)-1-C-(indol-3-yl)glycerol 3-phosphate + L-serine = D-glyceraldehyde 3-phosphate + L-tryptophan + H2O. Its pathway is amino-acid biosynthesis; L-tryptophan biosynthesis; L-tryptophan from chorismate: step 5/5. Its function is as follows. The beta subunit is responsible for the synthesis of L-tryptophan from indole and L-serine. The polypeptide is Tryptophan synthase beta chain (Pyrobaculum islandicum (strain DSM 4184 / JCM 9189 / GEO3)).